The following is a 420-amino-acid chain: MAAAAGDVRGAALGARPGLGAAAAAAAAAEARFISSAKGKGLFATRSIRKGEAVFVEKPVVSSQFLWNALYNYRACDHCLRALETAEENAQRLLGRSSLVLPHPEQCSIRKDLHQQCPRCQVTYCSAECRQAALEQYHQVLCLGPSRDDPTHPLNKLQEAWRNMHYPPETSSIMLMARMVATVKQAKDKDWWIKAFSQFCSKTANEEEEIAHKLLGDKFKGQLELLRLLFTEALYDEQLSRWFTPEGFRSLFALVGTNGQGIGTSSLSQWVHACDALDLPMLQREELDAFIDQLYKDIEKESGEFLNCEGSGLYMLQSCCNHSCIPNAETSFPDNNFLLYLTALEDIEAGEEICISYLDCCQRERSRHSRNKILRENYLFTCSCPKCLAQADDPDVTSDEEEEAEGETDDAELEDEMTDV.

In terms of domain architecture, SET spans 29–358; sequence AEARFISSAK…AGEEICISYL (330 aa). The MYND-type zinc finger occupies 104 to 142; it reads PEQCSIRKDLHQQCPRCQVTYCSAECRQAALEQYHQVLC. Residue tyrosine 357 participates in S-adenosyl-L-methionine binding. Positions 392-420 are disordered; it reads DDPDVTSDEEEEAEGETDDAELEDEMTDV.

It belongs to the class V-like SAM-binding methyltransferase superfamily.

It localises to the cytoplasm. The enzyme catalyses L-lysyl-[protein] + 3 S-adenosyl-L-methionine = N(6),N(6),N(6)-trimethyl-L-lysyl-[protein] + 3 S-adenosyl-L-homocysteine + 3 H(+). It carries out the reaction L-lysyl(20)-[histone H4] + 3 S-adenosyl-L-methionine = N(6),N(6),N(6)-trimethyl-L-lysyl(20)-[histone H4] + 3 S-adenosyl-L-homocysteine + 3 H(+). It catalyses the reaction L-lysyl(36)-[histone H3] + 3 S-adenosyl-L-methionine = N(6),N(6),N(6)-trimethyl-L-lysyl(36)-[histone H3] + 3 S-adenosyl-L-homocysteine + 3 H(+). Protein-lysine N-trimethyltransferase that specifically catalyzes trimethylation of 'Lys-22' of the RPL40/eL40 subunit of the 60S ribosome, thereby promoting translation elongation and protein synthesis. May also act as a histone methyltransferase in the context of histone octamers, but not on nucleosome substrates: trimethylates 'Lys-36' of histone H3 and 'Lys-20' of histone H4 to form H3K36me3 and H4K20me3, respectively. The histone methyltransferase activity, which is independent of its SET domain, is however unsure in vivo. This chain is Protein-lysine N-trimethyltransferase SMYD5 (SMYD5), found in Gallus gallus (Chicken).